The sequence spans 463 residues: uncharacterized protein (463 aa).

This is an uncharacterized protein from Lepidoptera (butterflies and moths).